The following is a 303-amino-acid chain: Mevalonate kinase (303 aa).

90-100 provides a ligand contact to ATP; the sequence is PAGSGLGSSAA. Aspartate 141 (proton acceptor) is an active-site residue.

The protein belongs to the GHMP kinase family. Mevalonate kinase subfamily. In terms of assembly, homodimer. Requires Mg(2+) as cofactor.

Its subcellular location is the cytoplasm. The enzyme catalyses (R)-mevalonate + ATP = (R)-5-phosphomevalonate + ADP + H(+). It participates in isoprenoid biosynthesis; isopentenyl diphosphate biosynthesis via mevalonate pathway; isopentenyl diphosphate from (R)-mevalonate: step 1/3. Catalyzes the phosphorylation of (R)-mevalonate (MVA) to (R)-mevalonate 5-phosphate (MVAP). Functions in the mevalonate (MVA) pathway leading to isopentenyl diphosphate (IPP), a key precursor for the biosynthesis of isoprenoid compounds such as archaeal membrane lipids. The chain is Mevalonate kinase from Methanothermobacter thermautotrophicus (strain ATCC 29096 / DSM 1053 / JCM 10044 / NBRC 100330 / Delta H) (Methanobacterium thermoautotrophicum).